Consider the following 467-residue polypeptide: Mitochondrial adenyl nucleotide antiporter SLC25A23 (467 aa).

A regulatory N-terminal domain region spans residues 1-148 (MRGGSSDAER…DHFLLHSLEN (148 aa)). Over 1–187 (MRGGSSDAER…EKLTGMWWKQ (187 aa)) the chain is Mitochondrial intermembrane. EF-hand domains are found at residues 9-44 (ERRQ…LGRG), 76-111 (EREQ…LGIS), and 112-147 (ISLE…HSLE). Residues Asp-22, Asn-24, Asp-26, Arg-28, and Glu-33 each coordinate Ca(2+). The segment at 39 to 61 (ARLGRGDPDRAQQGVSSDWDADP) is disordered. Ca(2+) contacts are provided by Asp-89, Asn-91, Asp-93, His-95, and Glu-100. Positions 149–158 (VEDVLYFWKH) are linker region. A C-terminal transmembrane transporter domain region spans residues 164-467 (IGECLTVPDE…MKQALGVTSR (304 aa)). 3 Solcar repeats span residues 182–268 (GMWW…IKRA), 276–361 (LHVQ…LKNR), and 373–461 (PGIL…MKQA). A helical transmembrane segment spans residues 188–205 (LVAGAVAGAVSRTGTAPL). Residues 206 to 242 (DRLKVFMQVHASKSNRLNILGGLRNMIQEGGVLSLWR) are Mitochondrial matrix-facing. Residues 243 to 262 (GNGINVLKIAPESAIKFMAY) traverse the membrane as a helical segment. The Mitochondrial intermembrane portion of the chain corresponds to 263–285 (EQIKRAIRGQQETLHVQERFVAG). The chain crosses the membrane as a helical span at residues 286–299 (SLAGATAQTIIYPM). Residues 300-335 (EVLKTRLTLRRTGQYKGLLDCAKRILEREGPRAFYR) lie on the Mitochondrial matrix side of the membrane. A helical membrane pass occupies residues 336–355 (GYLPNVLGIIPYAGIDLAVY). Over 356-378 (ETLKNRWLQQYSHESANPGILVL) the chain is Mitochondrial intermembrane. A helical membrane pass occupies residues 379 to 396 (LGCGTISSTCGQIASYPL). Over 397 to 435 (ALVRTRMQAQASIEGGPQVSMVGLLRHILSQEGVWGLYR) the chain is Mitochondrial matrix. Residues 436 to 455 (GIAPNFMKVIPAVSISYVVY) traverse the membrane as a helical segment. At 456–467 (ENMKQALGVTSR) the chain is on the mitochondrial intermembrane side.

This sequence belongs to the mitochondrial carrier (TC 2.A.29) family. Interacts with MCU. Interacts with MICU1.

The protein resides in the mitochondrion inner membrane. It carries out the reaction Mg(2+)(out) + phosphate(in) + ATP(out) = Mg(2+)(in) + phosphate(out) + ATP(in). The enzyme catalyses ADP(out) + phosphate(in) + H(+)(out) = ADP(in) + phosphate(out) + H(+)(in). It catalyses the reaction AMP(out) + phosphate(in) = AMP(in) + phosphate(out). The catalysed reaction is phosphate(in) + ATP(out) + 2 H(+)(out) = phosphate(out) + ATP(in) + 2 H(+)(in). It carries out the reaction dADP(in) + ADP(out) = dADP(out) + ADP(in). The enzyme catalyses Mg(2+)(in) + ADP(out) + ATP(in) + H(+)(out) = Mg(2+)(out) + ADP(in) + ATP(out) + H(+)(in). It catalyses the reaction ADP(out) + diphosphate(in) = ADP(in) + diphosphate(out). The catalysed reaction is dAMP(in) + ADP(out) + H(+)(out) = dAMP(out) + ADP(in) + H(+)(in). It carries out the reaction 3'-AMP(in) + ADP(out) + H(+)(out) = 3'-AMP(out) + ADP(in) + H(+)(in). The enzyme catalyses dAMP(out) + phosphate(in) = dAMP(in) + phosphate(out). It catalyses the reaction 3'-AMP(out) + phosphate(in) = 3'-AMP(in) + phosphate(out). The catalysed reaction is dADP(out) + phosphate(in) + H(+)(out) = dADP(in) + phosphate(out) + H(+)(in). With respect to regulation, activated by an increase in cytosolic calcium levels that induce a conformational change of the N-terminal regulatory domain, uncapping the channel and allowing transport. In terms of biological role, electroneutral antiporter that mediates the transport of adenine nucleotides through the inner mitochondrial membrane. Originally identified as an ATP-magnesium/inorganic phosphate antiporter, it also acts as a broad specificity adenyl nucleotide antiporter. By regulating the mitochondrial matrix adenine nucleotide pool could adapt to changing cellular energetic demands and indirectly regulate adenine nucleotide-dependent metabolic pathways. Also acts as a regulator of mitochondrial calcium uptake and can probably transport trace amounts of other divalent metal cations in complex with ATP. In vitro, a low activity is also observed with guanyl and pyrimidine nucleotides. The chain is Mitochondrial adenyl nucleotide antiporter SLC25A23 from Mus musculus (Mouse).